The chain runs to 67 residues: MLYPSIDNLLLKIDSKYSLVTVAAKRARYMQLENDKGVLPSYQSDKFVGKALEEIHAGKLVLKNDDK.

The protein belongs to the RNA polymerase subunit omega family. In terms of assembly, the RNAP catalytic core consists of 2 alpha, 1 beta, 1 beta' and 1 omega subunit. When a sigma factor is associated with the core the holoenzyme is formed, which can initiate transcription.

It carries out the reaction RNA(n) + a ribonucleoside 5'-triphosphate = RNA(n+1) + diphosphate. Promotes RNA polymerase assembly. Latches the N- and C-terminal regions of the beta' subunit thereby facilitating its interaction with the beta and alpha subunits. The chain is DNA-directed RNA polymerase subunit omega from Listeria monocytogenes serotype 4a (strain HCC23).